Consider the following 134-residue polypeptide: Mite allergen Blo t 5 (134 aa).

A signal peptide spans 1–17; sequence MKFAIVLIACFAASVLA. Residues 18–113 adopt a coiled-coil conformation; that stretch reads QEHKPKKDDF…RFNYEEAQTL (96 aa).

The protein belongs to the mite group 5 allergen family. As to quaternary structure, may exist as homodimer and homotrimer. As to expression, midgut and hindgut contents as well as fecal pellets (at protein level).

In Blomia tropicalis (Mite), this protein is Mite allergen Blo t 5 (BLOT5).